The following is a 1558-amino-acid chain: Eukaryotic translation initiation factor 2-alpha kinase 1 (1558 aa).

A Protein kinase domain is found at 429–789; sequence FFEEKILGCG…AYNLLHESVL (361 aa). Residues 435-443 and lysine 458 each bind ATP; that span reads LGCGGFGYV. Residue aspartate 660 is the Proton acceptor of the active site. Positions 1014–1033 are disordered; that stretch reads GTSTNNNNNNNNNNMGNNNI.

The protein belongs to the protein kinase superfamily. Ser/Thr protein kinase family. GCN2 subfamily. Post-translationally, auto-phosphorylated.

It carries out the reaction L-seryl-[protein] + ATP = O-phospho-L-seryl-[protein] + ADP + H(+). The catalysed reaction is L-threonyl-[protein] + ATP = O-phospho-L-threonyl-[protein] + ADP + H(+). In terms of biological role, in blood stage parasites, phosphorylates translation factor eIF2alpha in response to amino acid starvation. During the asexual blood stage, involved in the response to the host hormone melatonin which is used by the parasite to modulate its cell cycle. The protein is Eukaryotic translation initiation factor 2-alpha kinase 1 of Plasmodium falciparum (isolate 3D7).